The following is a 327-amino-acid chain: Aldo-keto reductase family 7 member A3 (327 aa).

A Phosphoserine modification is found at Ser-2. NADP(+)-binding residues include Met-13, Arg-18, and Asp-40. Tyr-45 functions as the Proton donor in the catalytic mechanism. His-109 serves as a coordination point for citrate. NADP(+)-binding residues include Asn-140, Asn-194, Leu-196, Gly-198, Arg-204, and Arg-218. Citrate contacts are provided by Tyr-228 and Arg-231. NADP(+) is bound by residues Ser-286, Gln-290, Gln-293, Asn-294, and Arg-327.

Belongs to the aldo/keto reductase family. Aldo/keto reductase 2 subfamily. Homodimer. Heterodimer with AKR7A2.

It is found in the cytoplasm. The catalysed reaction is a primary alcohol + NADP(+) = an aldehyde + NADPH + H(+). It carries out the reaction aflatoxin B1 dialdehyde + NADPH + H(+) = aflatoxin B1 C(6a)-monoaldehyde + NADP(+). The enzyme catalyses aflatoxin B1 dialdehyde + NADPH + H(+) = aflatoxin B1 C(8)-monoaldehyde + NADP(+). It catalyses the reaction aflatoxin B1 C(6a)-monoaldehyde + NADPH + 2 H(+) = aflatoxin B1 triol + NADP(+). Its activity is regulated as follows. Inhibited by citrate. Its function is as follows. Catalyzes the NADPH-dependent reduction of various carbonyl-containing compounds, including aldehydes, ketones, and toxic products from cellular metabolism or environmental exposure. Can reduce the dialdehyde form of aflatoxin B1 (AFB1) into alcohol derivatives, via monoaldehydes intermediates, thus preventing the formation of protein adducts that contribute to AFB1-induced toxicity. This chain is Aldo-keto reductase family 7 member A3, found in Rattus norvegicus (Rat).